A 660-amino-acid chain; its full sequence is DNA mismatch repair protein MutL (660 aa).

A disordered region spans residues 408 to 436 (DQTSASASVKHASRSQDENQLSEHPNLDF). Residues 425 to 436 (ENQLSEHPNLDF) show a composition bias toward polar residues.

The protein belongs to the DNA mismatch repair MutL/HexB family.

In terms of biological role, this protein is involved in the repair of mismatches in DNA. It is required for dam-dependent methyl-directed DNA mismatch repair. May act as a 'molecular matchmaker', a protein that promotes the formation of a stable complex between two or more DNA-binding proteins in an ATP-dependent manner without itself being part of a final effector complex. In Streptococcus uberis (strain ATCC BAA-854 / 0140J), this protein is DNA mismatch repair protein MutL.